Here is a 247-residue protein sequence, read N- to C-terminus: 14-3-3 protein zeta (247 aa).

It belongs to the 14-3-3 family. Homodimer.

It is found in the cytoplasm. Its function is as follows. Adapter protein implicated in the regulation of a large spectrum of both general and specialized signaling pathways. Binds to a large number of partners, usually by recognition of a phosphoserine or phosphothreonine motif. Binding generally results in the modulation of the activity of the binding partner. This Bombyx mori (Silk moth) protein is 14-3-3 protein zeta (14-3-3zeta).